Here is a 494-residue protein sequence, read N- to C-terminus: Probable cytosol aminopeptidase (494 aa).

Mn(2+) contacts are provided by Lys-260 and Asp-265. Residue Lys-272 is part of the active site. Mn(2+) contacts are provided by Asp-283, Asp-342, and Glu-344. Arg-346 is a catalytic residue.

This sequence belongs to the peptidase M17 family. Mn(2+) serves as cofactor.

Its subcellular location is the cytoplasm. It carries out the reaction Release of an N-terminal amino acid, Xaa-|-Yaa-, in which Xaa is preferably Leu, but may be other amino acids including Pro although not Arg or Lys, and Yaa may be Pro. Amino acid amides and methyl esters are also readily hydrolyzed, but rates on arylamides are exceedingly low.. The catalysed reaction is Release of an N-terminal amino acid, preferentially leucine, but not glutamic or aspartic acids.. In terms of biological role, presumably involved in the processing and regular turnover of intracellular proteins. Catalyzes the removal of unsubstituted N-terminal amino acids from various peptides. This Bacillus cereus (strain ATCC 10987 / NRS 248) protein is Probable cytosol aminopeptidase.